The chain runs to 178 residues: ATP synthase subunit delta (178 aa).

It belongs to the ATPase delta chain family. In terms of assembly, F-type ATPases have 2 components, F(1) - the catalytic core - and F(0) - the membrane proton channel. F(1) has five subunits: alpha(3), beta(3), gamma(1), delta(1), epsilon(1). F(0) has three main subunits: a(1), b(2) and c(10-14). The alpha and beta chains form an alternating ring which encloses part of the gamma chain. F(1) is attached to F(0) by a central stalk formed by the gamma and epsilon chains, while a peripheral stalk is formed by the delta and b chains.

The protein localises to the cell inner membrane. In terms of biological role, f(1)F(0) ATP synthase produces ATP from ADP in the presence of a proton or sodium gradient. F-type ATPases consist of two structural domains, F(1) containing the extramembraneous catalytic core and F(0) containing the membrane proton channel, linked together by a central stalk and a peripheral stalk. During catalysis, ATP synthesis in the catalytic domain of F(1) is coupled via a rotary mechanism of the central stalk subunits to proton translocation. This protein is part of the stalk that links CF(0) to CF(1). It either transmits conformational changes from CF(0) to CF(1) or is implicated in proton conduction. This Hahella chejuensis (strain KCTC 2396) protein is ATP synthase subunit delta.